The primary structure comprises 721 residues: Far upstream element-binding protein 2 (721 aa).

Positions 1-148 are disordered; that stretch reads MSDYSTGGPP…HPPPRTSMTE (148 aa). Residue Ser2 is modified to N-acetylserine. The span at 8 to 17 shows a compositional bias: pro residues; it reads GPPPGPPPPA. Composition is skewed to gly residues over residues 18 to 28 and 36 to 69; these read GGGGGAAGAGG and GAGDRGGGGPGGGGPGGGGASGGPSQPPGGGGPG. At Arg40 the chain carries Omega-N-methylarginine. An N6-acetyllysine modification is found at Lys88. Thr101 carries the post-translational modification Phosphothreonine. A compositionally biased stretch (basic and acidic residues) spans 111–123; that stretch reads RQLEDGDQPDSKK. A Glycyl lysine isopeptide (Lys-Gly) (interchain with G-Cter in SUMO1); alternate cross-link involves residue Lys122. Lys122 is covalently cross-linked (Glycyl lysine isopeptide (Lys-Gly) (interchain with G-Cter in SUMO2); alternate). Phosphoserine is present on residues Ser126, Ser130, Ser182, Ser185, Ser194, and Ser275. KH domains follow at residues 145–209, 234–300, and 323–387; these read SMTE…KMML, GTVQ…CEMV, and GGGI…ARII. The segment at 394–422 is disordered; the sequence is LRSGPPGPPGAPGMPPGGRGRGRGQGNWG. The segment covering 398-408 has biased composition (pro residues); that stretch reads PPGPPGAPGMP. Positions 409–422 are enriched in gly residues; it reads PGGRGRGRGQGNWG. 4 positions are modified to omega-N-methylarginine: Arg412, Arg414, Arg416, and Arg443. Residues 425 to 492 enclose the KH 4 domain; sequence GGEMTFSIPT…QQIDHAKQLI (68 aa). At Ser481 the chain carries Phosphoserine. The tract at residues 498–570 is disordered; sequence GPLCPVGPGP…HDPNKAAAAA (73 aa). Composition is skewed to pro residues over residues 502–521 and 529–543; these read PVGPGPGGPGPAGPMGPFHP and PGAPPHAGGPPPHQY. Repeat 1 spans residues 572–583; sequence DPNAAWAAYYSH. Positions 572–685 are 4 X 12 AA imperfect repeats; that stretch reads DPNAAWAAYY…SAAWAEYYRQ (114 aa). The segment covering 588 to 614 has biased composition (pro residues); that stretch reads PPGPVPGPAPAPAAPPAQGEPPQPPPT. Disordered stretches follow at residues 588-650, 659-678, and 688-721; these read PPGP…KAWE, VATGGGPGAPPGSQPDYSAA, and AYYGQTPGPGGPQPPSTQQGQQQATEANGYELHL. 3 tandem repeats follow at residues 618 to 629, 644 to 655, and 674 to 685.

This sequence belongs to the KHSRP family. In terms of assembly, part of a ternary complex containing FUBP2, PTBP1, PTBP2 and HNRPH1. Interacts with PARN. Interacts with PQBP1.

It localises to the nucleus. Its subcellular location is the cytoplasm. Part of a ternary complex that binds to the downstream control sequence (DCS) of the pre-mRNA. Mediates exon inclusion in transcripts that are subject to tissue-specific alternative splicing. May interact with single-stranded DNA from the far-upstream element (FUSE). May activate gene expression. Also involved in degradation of inherently unstable mRNAs that contain AU-rich elements (AREs) in their 3'-UTR, possibly by recruiting degradation machinery to ARE-containing mRNAs. Binds to the dendritic targeting element and may play a role in mRNA trafficking. The sequence is that of Far upstream element-binding protein 2 (Khsrp) from Rattus norvegicus (Rat).